Here is a 343-residue protein sequence, read N- to C-terminus: Lumican (343 aa).

An N-terminal signal peptide occupies residues 1–18; the sequence is MTLNSLPIFLVLISGIFC. Q19 is modified (pyrrolidone carboxylic acid). 2 positions are modified to sulfotyrosine: Y20 and Y22. Residues 31–69 form the LRRNT domain; that stretch reads DPFGPSTAVCAPECNCPLSYPTAMYCDNLKLKTIPIVPS. LRR repeat units lie at residues 70-91, 94-117, 120-140, 141-162, 165-186, 190-211, 212-232, and 235-255; these read GIKYLYLRNNMIEAIEENTFDN, DLQWLILDHNHLENSKIKGRVFSK, NLKKLHINYNNLTEAVGPLPK, TLDDLQLSHNKITKVNPGALEG, NLTVIHLQNNQLKTDSISGAFK, SLLYLDLSFNQLTKLPTGLPHS, LLMLYFDNNQISNIPDEYFQG, and TLQYLRLSHNKLTDSGIPGNV. N91 carries N-linked (GlcNAc...) (keratan sulfate) asparagine glycosylation. Residue N130 is glycosylated (N-linked (GlcNAc...) (keratan sulfate) asparagine). N165 carries N-linked (GlcNAc...) (keratan sulfate) asparagine glycosylation. The N-linked (GlcNAc...) (keratan sulfate) asparagine glycan is linked to N257. LRR repeat units lie at residues 260–281, 282–301, and 310–330; these read SLVELDLSFNQLKSIPTVSENL, ENFYLQVNKINKFPLSSFCK, and KITHLRLDGNNLTRADLPQEM. A disulfide bond links C300 and C333. N320 is a glycosylation site (N-linked (GlcNAc...) asparagine).

This sequence belongs to the small leucine-rich proteoglycan (SLRP) family. SLRP class II subfamily. Binds to laminin. Contains keratan sulfate. In terms of tissue distribution, cornea and other tissues.

It is found in the secreted. The protein localises to the extracellular space. It localises to the extracellular matrix. This chain is Lumican (LUM), found in Gallus gallus (Chicken).